We begin with the raw amino-acid sequence, 304 residues long: MSEKNLLTALSKMITEQRNPNSMNIDQLSALELVKVINQEDKQVPLAVEKCLAQIAQAVEKIVQAFQNGGRLVYIGAGTSGRLGVLDASECPPTYGVSSEMVVGIIAGGERALRHPIEGAEDNTEQGKAALQAVNFSQKDVLVGIAASGRTPYVIGALEYAKSLGATTVSIASNPNSAMAQIAEIAIDTVVGPEILTGSSRMKSGTAQKLVLNMLTTASMVMIGKCYSNLMVDVQASNEKLKARAIKIVMEATECDRTVAENTLKIAENNAKLAIMMILSDSDKTTAEQLLSKHHGKLRQALVN.

Positions 62 to 225 (IVQAFQNGGR…TTASMVMIGK (164 aa)) constitute an SIS domain. Glu90 functions as the Proton donor in the catalytic mechanism. Glu121 is an active-site residue.

It belongs to the GCKR-like family. MurNAc-6-P etherase subfamily. Homodimer.

The catalysed reaction is N-acetyl-D-muramate 6-phosphate + H2O = N-acetyl-D-glucosamine 6-phosphate + (R)-lactate. The protein operates within amino-sugar metabolism; 1,6-anhydro-N-acetylmuramate degradation. It functions in the pathway amino-sugar metabolism; N-acetylmuramate degradation. It participates in cell wall biogenesis; peptidoglycan recycling. In terms of biological role, specifically catalyzes the cleavage of the D-lactyl ether substituent of MurNAc 6-phosphate, producing GlcNAc 6-phosphate and D-lactate. Together with AnmK, is also required for the utilization of anhydro-N-acetylmuramic acid (anhMurNAc) either imported from the medium or derived from its own cell wall murein, and thus plays a role in cell wall recycling. This Actinobacillus pleuropneumoniae serotype 7 (strain AP76) protein is N-acetylmuramic acid 6-phosphate etherase.